The following is a 357-amino-acid chain: Homeobox protein HMX3 (357 aa).

2 disordered regions span residues 1–58 (MPEP…LFAP) and 129–229 (LPRP…RKKK). The span at 16 to 27 (PQPPPPPPPAPK) shows a compositional bias: pro residues. 2 stretches are compositionally biased toward basic and acidic residues: residues 130–140 (PRPEASEKALL) and 149–173 (TDRD…KSPD). 2 positions are modified to phosphoserine: Ser-153 and Ser-180. A compositionally biased stretch (low complexity) spans 191–209 (AAPGAAGASVGAAAATPGA). Positions 210 to 223 (EDWKKGAESPEKKP) are enriched in basic and acidic residues. Positions 227–286 (KKKTRTVFSRSQVFQLESTFDMKRYLSSSERAGLAASLHLTETQVKIWFQNRRNKWKRQL) form a DNA-binding region, homeobox.

It belongs to the HMX homeobox family.

The protein resides in the nucleus. Transcription factor involved in specification of neuronal cell types and which is required for inner ear and hypothalamus development. Binds to the 5'-CAAGTG-3' core sequence. Controls semicircular canal formation in the inner ear. Also required for hypothalamic/pituitary axis of the CNS. The polypeptide is Homeobox protein HMX3 (HMX3) (Homo sapiens (Human)).